The sequence spans 163 residues: MAKFLLLALTFGLAHAAMEGPWKTVAIAADRVDKIERGGELRIYCRSLTCEKECKEMKVTFYVNENGQCSLTTITGYLQEDGKTYKTQFQGNNRYKLVDESPENLTFYSENVDRADRKTKLLFILGHGPLTSEQKEKFAELAEEKGIPAGNIREVLITDYCPE.

An N-terminal signal peptide occupies residues 1–16 (MAKFLLLALTFGLAHA). 2 cysteine pairs are disulfide-bonded: Cys50/Cys54 and Cys69/Cys161.

It belongs to the calycin superfamily. Lipocalin family. As to quaternary structure, may form a heterodimer with OBP1B. The N-terminus may be blocked. As to expression, expressed in nasal mucosa (at protein level). Specifically detected in septal and lateral nasal glands.

It is found in the secreted. Its function is as follows. Binds the chemical odorant 2-isobutyl-3-methoxypyrazine. This is Odorant-binding protein 1a from Mus musculus (Mouse).